The primary structure comprises 1256 residues: Protein flightless-1 (1256 aa).

15 LRR repeats span residues 4 to 28 (LPFV…MRQM), 29 to 51 (SRVQ…LGHL), 52 to 74 (QKLE…LTEL), 75 to 99 (SCLR…LFHL), 100 to 122 (EELT…LERA), 124 to 145 (NLIV…LFIH), 147 to 169 (TDLL…TRRL), 171 to 192 (NLKT…QLPS), 218 to 241 (LANL…VYNV), 243 to 264 (TLVR…VELW), 265 to 287 (QRLE…LCKL), 289 to 312 (KLRR…IGKL), 313 to 335 (GALE…LCRC), 336 to 358 (GALK…IHLL), and 360 to 381 (GLDQ…PSEA). Positions 405–476 (AAVPPSMPSS…ESLKPKRWDE (72 aa)) are disordered. Basic and acidic residues predominate over residues 431-476 (PRSEGDQDAAKVLKGMKDVAKDKDNEAGAVPEDGKPESLKPKRWDE). Gelsolin-like repeat units follow at residues 512-589 (IEEV…EQFL), 633-703 (EPVA…AEFW), 749-822 (VELP…MQIF), and 1168-1242 (EKCA…SRRF).

Belongs to the villin/gelsolin family. In terms of tissue distribution, found in ovaries, larval fat bodies, brain and adult thorax.

Its function is as follows. May play a key role in embryonic cellularization by interacting with both the cytoskeleton and other cellular components. Alternatively, it may play a structural role in indirect flight muscle. Vital for embryonic development. This chain is Protein flightless-1 (fliI), found in Drosophila melanogaster (Fruit fly).